Consider the following 426-residue polypeptide: Tol-Pal system protein TolB (426 aa).

The signal sequence occupies residues 1–24 (MKLKSRYTSLISVVSIFFSSMVMA).

It belongs to the TolB family. In terms of assembly, the Tol-Pal system is composed of five core proteins: the inner membrane proteins TolA, TolQ and TolR, the periplasmic protein TolB and the outer membrane protein Pal. They form a network linking the inner and outer membranes and the peptidoglycan layer.

It localises to the periplasm. Part of the Tol-Pal system, which plays a role in outer membrane invagination during cell division and is important for maintaining outer membrane integrity. In Haemophilus ducreyi (strain 35000HP / ATCC 700724), this protein is Tol-Pal system protein TolB.